The sequence spans 148 residues: Putative carbonic anhydrase (148 aa).

The Alpha-carbonic anhydrase domain occupies 1-146 (CLKRLQPGEM…LNGRTVFEVH (146 aa)).

Belongs to the alpha-carbonic anhydrase family. Zn(2+) serves as cofactor. In terms of tissue distribution, component of the acid-insoluble organic matrix of the aragonitic skeleton (at protein level).

Its subcellular location is the secreted. The enzyme catalyses hydrogencarbonate + H(+) = CO2 + H2O. Functionally, reversible hydration of carbon dioxide. This Acropora millepora (Staghorn coral) protein is Putative carbonic anhydrase.